Consider the following 677-residue polypeptide: WD repeat-containing protein 48 (677 aa).

The residue at position 28 (Tyr28) is a Phosphotyrosine. 8 WD repeats span residues 28-67 (YNRN…QDPY), 73-112 (HHTD…CMST), 115-154 (THKD…ALTA), 166-205 (GNKD…KLMK), 208-247 (GHTD…CIAT), 250-289 (VHDE…IRVL), 292-334 (EEKA…NFRA), and 358-397 (KGGA…KVED). Lys214 carries the post-translational modification N6-acetyllysine. Lys578 is subject to N6-acetyllysine. The segment at 607–628 (LDNESQTTSSSNNEKPGEQEKE) is disordered. Residues 609 to 620 (NESQTTSSSNNE) are compositionally biased toward low complexity. Thr613 is modified (phosphothreonine).

The protein belongs to the WD repeat WDR48 family. In terms of assembly, interacts with USP46. Interacts with USP1. Interacts with USP12. Component of the USP12-WDR20-WDR48 deubiquitinating complex. Component of the USP12-DMWD-WDR48 deubiquitinating complex. Interacts with PHLPP1. Interacts with RAD51AP1; the interaction is direct and promotes formation of a trimeric complex with RAD51 via RAD51AP1. Interacts with ATAD5; the interaction regulates USP1-mediated PCNA deubiquitination. Interacts with RAD51; the interaction is enhanced under replication stress. Interacts with ITCH; the interaction is more efficient when both USP12 and WDR48/UAF1 are involved and may facilitate recruitment of the USP12 deubiquitinating complex to Notch. (Microbial infection) Interacts with papillomavirus HPV11 E1 protein. As to quaternary structure, (Microbial infection) Interacts with Saimiriine herpesvirus TIP protein. In terms of assembly, (Microbial infection) Interacts with human cytomegalovirus protein UL138. (Microbial infection) Interacts with Epstein-Barr virus protein EBNA3. Ubiquitous.

The protein resides in the nucleus. It is found in the cytoplasm. The protein localises to the lysosome. It localises to the late endosome. Functionally, regulator of deubiquitinating complexes, which acts as a strong activator of USP1, USP12 and USP46. Enhances the USP1-mediated deubiquitination of FANCD2; USP1 being almost inactive by itself. Activates deubiquitination by increasing the catalytic turnover without increasing the affinity of deubiquitinating enzymes for the substrate. Also activates deubiquitinating activity of complexes containing USP12. In complex with USP12, acts as a potential tumor suppressor by positively regulating PHLPP1 stability. Docks at the distal end of the USP12 fingers domain and induces a cascade of structural changes leading to the activation of the enzyme. Together with RAD51AP1, promotes DNA repair by stimulating RAD51-mediated homologous recombination. Binds single-stranded DNA (ssDNA) and double-stranded DNA (dsDNA). DNA-binding is required both for USP1-mediated deubiquitination of FANCD2 and stimulation of RAD51-mediated homologous recombination: both WDR48/UAF1 and RAD51AP1 have coordinated role in DNA-binding during these processes. Together with ATAD5 and by regulating USP1 activity, has a role in PCNA-mediated translesion synthesis (TLS) by deubiquitinating monoubiquitinated PCNA. Together with ATAD5, has a role in recruiting RAD51 to stalled forks during replication stress. In terms of biological role, (Microbial infection) In case of infection by Herpesvirus saimiri, may play a role in vesicular transport or membrane fusion events necessary for transport to lysosomes. Induces lysosomal vesicle formation via interaction with Herpesvirus saimiri tyrosine kinase-interacting protein (TIP). Subsequently, TIP recruits tyrosine-protein kinase LCK, resulting in down-regulation of T-cell antigen receptor TCR. May play a role in generation of enlarged endosomal vesicles via interaction with TIP. In case of infection by papillomavirus HPV11, promotes the maintenance of the viral genome via its interaction with HPV11 helicase E1. In Homo sapiens (Human), this protein is WD repeat-containing protein 48.